The chain runs to 294 residues: Ferredoxin--NADP reductase (294 aa).

Positions 13-137 constitute an FAD-binding FR-type domain; it reads KNPYIGKCLS…TGPVGKEMLL (125 aa). Residues 72–75, 93–95, tyrosine 99, 111–113, and threonine 152 contribute to the FAD site; these read RLYS, CVR, and VCS. Serine 75 and arginine 95 together coordinate NADP(+). NADP(+) contacts are provided by residues threonine 152, 184-185, 214-215, lysine 224, 224-228, 253-254, and glutamate 292; these read IP, SR, KMYIQ, and GL.

The protein belongs to the ferredoxin--NADP reductase type 1 family. The cofactor is FAD.

The protein localises to the cellular thylakoid membrane. The enzyme catalyses 2 reduced [2Fe-2S]-[ferredoxin] + NADP(+) + H(+) = 2 oxidized [2Fe-2S]-[ferredoxin] + NADPH. This is Ferredoxin--NADP reductase (petH) from Spirulina sp.